We begin with the raw amino-acid sequence, 207 residues long: Peptidyl-tRNA hydrolase (207 aa).

Position 14 (Tyr14) interacts with tRNA. His19 serves as the catalytic Proton acceptor. Positions 64, 66, and 112 each coordinate tRNA.

It belongs to the PTH family. Monomer.

Its subcellular location is the cytoplasm. The catalysed reaction is an N-acyl-L-alpha-aminoacyl-tRNA + H2O = an N-acyl-L-amino acid + a tRNA + H(+). In terms of biological role, hydrolyzes ribosome-free peptidyl-tRNAs (with 1 or more amino acids incorporated), which drop off the ribosome during protein synthesis, or as a result of ribosome stalling. Functionally, catalyzes the release of premature peptidyl moieties from peptidyl-tRNA molecules trapped in stalled 50S ribosomal subunits, and thus maintains levels of free tRNAs and 50S ribosomes. The chain is Peptidyl-tRNA hydrolase from Rhodopseudomonas palustris (strain BisB5).